Here is a 200-residue protein sequence, read N- to C-terminus: Large ribosomal subunit protein uL4 (200 aa).

Residues 38-68 form a disordered region; that stretch reads GRQGSKQQKTRSDVRGGGKRPWRQKGTGRAR. A compositionally biased stretch (basic residues) spans 54–65; the sequence is GGKRPWRQKGTG.

It belongs to the universal ribosomal protein uL4 family. In terms of assembly, part of the 50S ribosomal subunit.

Functionally, one of the primary rRNA binding proteins, this protein initially binds near the 5'-end of the 23S rRNA. It is important during the early stages of 50S assembly. It makes multiple contacts with different domains of the 23S rRNA in the assembled 50S subunit and ribosome. Forms part of the polypeptide exit tunnel. The sequence is that of Large ribosomal subunit protein uL4 from Pseudomonas syringae pv. tomato (strain ATCC BAA-871 / DC3000).